A 165-amino-acid polypeptide reads, in one-letter code: 3-hydroxyacyl-[acyl-carrier-protein] dehydratase FabZ (165 aa).

Histidine 68 is a catalytic residue.

Belongs to the thioester dehydratase family. FabZ subfamily.

Its subcellular location is the cytoplasm. It carries out the reaction a (3R)-hydroxyacyl-[ACP] = a (2E)-enoyl-[ACP] + H2O. Functionally, involved in unsaturated fatty acids biosynthesis. Catalyzes the dehydration of short chain beta-hydroxyacyl-ACPs and long chain saturated and unsaturated beta-hydroxyacyl-ACPs. In Methylobacterium sp. (strain 4-46), this protein is 3-hydroxyacyl-[acyl-carrier-protein] dehydratase FabZ.